The primary structure comprises 382 residues: Queuine tRNA-ribosyltransferase (382 aa).

Aspartate 93 serves as the catalytic Proton acceptor. Substrate-binding positions include 93-97, aspartate 147, glutamine 191, and glycine 218; that span reads DSGGF. The segment at 249–255 is RNA binding; that stretch reads GVGKPED. The active-site Nucleophile is the aspartate 268. Residues 273-277 form an RNA binding; important for wobble base 34 recognition region; that stretch reads TRNAR. Cysteine 306, cysteine 308, cysteine 311, and histidine 337 together coordinate Zn(2+).

The protein belongs to the queuine tRNA-ribosyltransferase family. Homodimer. Within each dimer, one monomer is responsible for RNA recognition and catalysis, while the other monomer binds to the replacement base PreQ1. Zn(2+) is required as a cofactor.

The enzyme catalyses 7-aminomethyl-7-carbaguanine + guanosine(34) in tRNA = 7-aminomethyl-7-carbaguanosine(34) in tRNA + guanine. It participates in tRNA modification; tRNA-queuosine biosynthesis. Its function is as follows. Catalyzes the base-exchange of a guanine (G) residue with the queuine precursor 7-aminomethyl-7-deazaguanine (PreQ1) at position 34 (anticodon wobble position) in tRNAs with GU(N) anticodons (tRNA-Asp, -Asn, -His and -Tyr). Catalysis occurs through a double-displacement mechanism. The nucleophile active site attacks the C1' of nucleotide 34 to detach the guanine base from the RNA, forming a covalent enzyme-RNA intermediate. The proton acceptor active site deprotonates the incoming PreQ1, allowing a nucleophilic attack on the C1' of the ribose to form the product. After dissociation, two additional enzymatic reactions on the tRNA convert PreQ1 to queuine (Q), resulting in the hypermodified nucleoside queuosine (7-(((4,5-cis-dihydroxy-2-cyclopenten-1-yl)amino)methyl)-7-deazaguanosine). The sequence is that of Queuine tRNA-ribosyltransferase from Haemophilus influenzae (strain 86-028NP).